Reading from the N-terminus, the 132-residue chain is Ribosome-binding factor A (132 aa).

It belongs to the RbfA family. In terms of assembly, monomer. Binds 30S ribosomal subunits, but not 50S ribosomal subunits or 70S ribosomes.

The protein resides in the cytoplasm. In terms of biological role, one of several proteins that assist in the late maturation steps of the functional core of the 30S ribosomal subunit. Associates with free 30S ribosomal subunits (but not with 30S subunits that are part of 70S ribosomes or polysomes). Required for efficient processing of 16S rRNA. May interact with the 5'-terminal helix region of 16S rRNA. In Pectobacterium carotovorum subsp. carotovorum (strain PC1), this protein is Ribosome-binding factor A.